A 132-amino-acid chain; its full sequence is Phosphoribosyl-AMP cyclohydrolase (132 aa).

Position 79 (Asp79) interacts with Mg(2+). Cys80 lines the Zn(2+) pocket. Residues Asp81 and Asp83 each coordinate Mg(2+). Zn(2+) is bound by residues Cys100 and Cys107.

It belongs to the PRA-CH family. As to quaternary structure, homodimer. Mg(2+) serves as cofactor. Requires Zn(2+) as cofactor.

It is found in the cytoplasm. The catalysed reaction is 1-(5-phospho-beta-D-ribosyl)-5'-AMP + H2O = 1-(5-phospho-beta-D-ribosyl)-5-[(5-phospho-beta-D-ribosylamino)methylideneamino]imidazole-4-carboxamide. The protein operates within amino-acid biosynthesis; L-histidine biosynthesis; L-histidine from 5-phospho-alpha-D-ribose 1-diphosphate: step 3/9. Catalyzes the hydrolysis of the adenine ring of phosphoribosyl-AMP. In Acidovorax sp. (strain JS42), this protein is Phosphoribosyl-AMP cyclohydrolase.